The primary structure comprises 158 residues: Ribosome maturation factor RimP (158 aa).

The protein belongs to the RimP family.

It localises to the cytoplasm. Functionally, required for maturation of 30S ribosomal subunits. In Pseudomonas fluorescens (strain SBW25), this protein is Ribosome maturation factor RimP.